Consider the following 209-residue polypeptide: Thiamine-phosphate synthase (209 aa).

Residues 40 to 44 and N72 contribute to the 4-amino-2-methyl-5-(diphosphooxymethyl)pyrimidine site; that span reads QLREK. Mg(2+)-binding residues include D73 and D92. S111 contacts 4-amino-2-methyl-5-(diphosphooxymethyl)pyrimidine. 137-139 is a binding site for 2-[(2R,5Z)-2-carboxy-4-methylthiazol-5(2H)-ylidene]ethyl phosphate; it reads TNS. K140 contacts 4-amino-2-methyl-5-(diphosphooxymethyl)pyrimidine. Residues G167 and 187–188 contribute to the 2-[(2R,5Z)-2-carboxy-4-methylthiazol-5(2H)-ylidene]ethyl phosphate site; that span reads IS.

This sequence belongs to the thiamine-phosphate synthase family. Mg(2+) serves as cofactor.

It catalyses the reaction 2-[(2R,5Z)-2-carboxy-4-methylthiazol-5(2H)-ylidene]ethyl phosphate + 4-amino-2-methyl-5-(diphosphooxymethyl)pyrimidine + 2 H(+) = thiamine phosphate + CO2 + diphosphate. The enzyme catalyses 2-(2-carboxy-4-methylthiazol-5-yl)ethyl phosphate + 4-amino-2-methyl-5-(diphosphooxymethyl)pyrimidine + 2 H(+) = thiamine phosphate + CO2 + diphosphate. The catalysed reaction is 4-methyl-5-(2-phosphooxyethyl)-thiazole + 4-amino-2-methyl-5-(diphosphooxymethyl)pyrimidine + H(+) = thiamine phosphate + diphosphate. Its pathway is cofactor biosynthesis; thiamine diphosphate biosynthesis; thiamine phosphate from 4-amino-2-methyl-5-diphosphomethylpyrimidine and 4-methyl-5-(2-phosphoethyl)-thiazole: step 1/1. In terms of biological role, condenses 4-methyl-5-(beta-hydroxyethyl)thiazole monophosphate (THZ-P) and 2-methyl-4-amino-5-hydroxymethyl pyrimidine pyrophosphate (HMP-PP) to form thiamine monophosphate (TMP). This Clostridium tetani (strain Massachusetts / E88) protein is Thiamine-phosphate synthase.